The primary structure comprises 287 residues: Ribonuclease Z (287 aa).

The Zn(2+) site is built by His-64, His-66, Asp-68, His-69, His-124, Asp-191, and His-250. Catalysis depends on Asp-68, which acts as the Proton acceptor.

The protein belongs to the RNase Z family. In terms of assembly, homodimer. It depends on Zn(2+) as a cofactor.

It catalyses the reaction Endonucleolytic cleavage of RNA, removing extra 3' nucleotides from tRNA precursor, generating 3' termini of tRNAs. A 3'-hydroxy group is left at the tRNA terminus and a 5'-phosphoryl group is left at the trailer molecule.. Zinc phosphodiesterase, which displays some tRNA 3'-processing endonuclease activity. Probably involved in tRNA maturation, by removing a 3'-trailer from precursor tRNA. The protein is Ribonuclease Z of Pyrobaculum aerophilum (strain ATCC 51768 / DSM 7523 / JCM 9630 / CIP 104966 / NBRC 100827 / IM2).